A 156-amino-acid chain; its full sequence is Small ribosomal subunit protein uS7 (156 aa).

This sequence belongs to the universal ribosomal protein uS7 family. As to quaternary structure, part of the 30S ribosomal subunit. Contacts proteins S9 and S11.

Its function is as follows. One of the primary rRNA binding proteins, it binds directly to 16S rRNA where it nucleates assembly of the head domain of the 30S subunit. Is located at the subunit interface close to the decoding center, probably blocks exit of the E-site tRNA. In Haemophilus influenzae (strain 86-028NP), this protein is Small ribosomal subunit protein uS7.